Reading from the N-terminus, the 116-residue chain is Large ribosomal subunit protein bL19 (116 aa).

Belongs to the bacterial ribosomal protein bL19 family.

Functionally, this protein is located at the 30S-50S ribosomal subunit interface and may play a role in the structure and function of the aminoacyl-tRNA binding site. This Staphylococcus saprophyticus subsp. saprophyticus (strain ATCC 15305 / DSM 20229 / NCIMB 8711 / NCTC 7292 / S-41) protein is Large ribosomal subunit protein bL19.